A 379-amino-acid polypeptide reads, in one-letter code: Homoserine O-succinyltransferase (379 aa).

An AB hydrolase-1 domain is found at 51-360 (NAVLICHALS…DAPQGHDAFL (310 aa)). Catalysis depends on S157, which acts as the Nucleophile. A substrate-binding site is contributed by R227. Active-site residues include D323 and H356. D357 contributes to the substrate binding site.

This sequence belongs to the AB hydrolase superfamily. MetX family. Homodimer.

It is found in the cytoplasm. It carries out the reaction L-homoserine + succinyl-CoA = O-succinyl-L-homoserine + CoA. The protein operates within amino-acid biosynthesis; L-methionine biosynthesis via de novo pathway; O-succinyl-L-homoserine from L-homoserine: step 1/1. In terms of biological role, transfers a succinyl group from succinyl-CoA to L-homoserine, forming succinyl-L-homoserine. This chain is Homoserine O-succinyltransferase, found in Pseudomonas aeruginosa (strain UCBPP-PA14).